The primary structure comprises 385 residues: Outer membrane porin protein BP0840 (385 aa).

The N-terminal stretch at 1–20 (MKKTLLAAALLAGFAGAAQA) is a signal peptide.

To bacterial outer membrane proteins and porins. In terms of assembly, homotrimer.

Its subcellular location is the cell outer membrane. Its function is as follows. Forms anion selective channels. In Bordetella pertussis (strain Tohama I / ATCC BAA-589 / NCTC 13251), this protein is Outer membrane porin protein BP0840.